The following is a 348-amino-acid chain: NADH-quinone oxidoreductase subunit H (348 aa).

The next 9 membrane-spanning stretches (helical) occupy residues 13–33 (LIMV…IAFL), 50–70 (PNVV…KFIL), 82–102 (AVFL…YAVI), 115–135 (VGIL…IMGG), 161–181 (IGLV…TDIV), 198–218 (FLDW…ISGL), 258–278 (AIVL…LPIV), 285–305 (WVPG…MIAL), and 321–341 (LGWK…AFVL).

Belongs to the complex I subunit 1 family. NDH-1 is composed of 14 different subunits. Subunits NuoA, H, J, K, L, M, N constitute the membrane sector of the complex.

The protein localises to the cell inner membrane. The catalysed reaction is a quinone + NADH + 5 H(+)(in) = a quinol + NAD(+) + 4 H(+)(out). In terms of biological role, NDH-1 shuttles electrons from NADH, via FMN and iron-sulfur (Fe-S) centers, to quinones in the respiratory chain. The immediate electron acceptor for the enzyme in this species is believed to be ubiquinone. Couples the redox reaction to proton translocation (for every two electrons transferred, four hydrogen ions are translocated across the cytoplasmic membrane), and thus conserves the redox energy in a proton gradient. This subunit may bind ubiquinone. This Agrobacterium fabrum (strain C58 / ATCC 33970) (Agrobacterium tumefaciens (strain C58)) protein is NADH-quinone oxidoreductase subunit H.